A 138-amino-acid chain; its full sequence is Large ribosomal subunit protein uL16 (138 aa).

Positions 1 to 13 (MLQPSRRKYRKEQ) are enriched in basic residues. A disordered region spans residues 1–20 (MLQPSRRKYRKEQKGRNTGL).

It belongs to the universal ribosomal protein uL16 family. Part of the 50S ribosomal subunit.

Binds 23S rRNA and is also seen to make contacts with the A and possibly P site tRNAs. This Bordetella avium (strain 197N) protein is Large ribosomal subunit protein uL16.